The following is a 120-amino-acid chain: NAD(P)H-quinone oxidoreductase subunit 3 (120 aa).

3 helical membrane passes run 6 to 26, 64 to 84, and 89 to 109; these read GYDA…LALV, MFAL…PWAV, and LGLL…VALA.

This sequence belongs to the complex I subunit 3 family. As to quaternary structure, NDH-1 can be composed of about 15 different subunits; different subcomplexes with different compositions have been identified which probably have different functions.

It is found in the cellular thylakoid membrane. The catalysed reaction is a plastoquinone + NADH + (n+1) H(+)(in) = a plastoquinol + NAD(+) + n H(+)(out). It carries out the reaction a plastoquinone + NADPH + (n+1) H(+)(in) = a plastoquinol + NADP(+) + n H(+)(out). Functionally, NDH-1 shuttles electrons from an unknown electron donor, via FMN and iron-sulfur (Fe-S) centers, to quinones in the respiratory and/or the photosynthetic chain. The immediate electron acceptor for the enzyme in this species is believed to be plastoquinone. Couples the redox reaction to proton translocation, and thus conserves the redox energy in a proton gradient. Cyanobacterial NDH-1 also plays a role in inorganic carbon-concentration. In Synechococcus sp. (strain CC9605), this protein is NAD(P)H-quinone oxidoreductase subunit 3.